Reading from the N-terminus, the 295-residue chain is ATP synthase subunit a (295 aa).

The next 7 membrane-spanning stretches (helical) occupy residues 41–61 (KWSA…WLGF), 101–121 (YLTI…IPVA), 129–149 (IALP…VGIR), 161–181 (LVPA…IEFV), 191–211 (LAIR…VFAL), 222–242 (FVFG…ELMI), and 244–264 (VLQA…AISS).

This sequence belongs to the ATPase A chain family. F-type ATPases have 2 components, CF(1) - the catalytic core - and CF(0) - the membrane proton channel. CF(1) has five subunits: alpha(3), beta(3), gamma(1), delta(1), epsilon(1). CF(0) has three main subunits: a(1), b(2) and c(9-12). The alpha and beta chains form an alternating ring which encloses part of the gamma chain. CF(1) is attached to CF(0) by a central stalk formed by the gamma and epsilon chains, while a peripheral stalk is formed by the delta and b chains.

The protein resides in the cell membrane. Functionally, key component of the proton channel; it plays a direct role in the translocation of protons across the membrane. The sequence is that of ATP synthase subunit a from Parafrankia sp. (strain EAN1pec).